The primary structure comprises 119 residues: Large ribosomal subunit protein bL20 (119 aa).

It belongs to the bacterial ribosomal protein bL20 family.

In terms of biological role, binds directly to 23S ribosomal RNA and is necessary for the in vitro assembly process of the 50S ribosomal subunit. It is not involved in the protein synthesizing functions of that subunit. In Metamycoplasma arthritidis (strain 158L3-1) (Mycoplasma arthritidis), this protein is Large ribosomal subunit protein bL20.